A 449-amino-acid polypeptide reads, in one-letter code: Tubulin alpha-1B chain (449 aa).

GTP is bound at residue Gln-11. At Lys-40 the chain carries N6-acetyllysine. GTP-binding residues include Glu-71, Ser-140, Gly-144, Thr-145, Thr-179, Asn-206, and Asn-228. Glu-71 is a Mg(2+) binding site. Glu-254 is an active-site residue.

The protein belongs to the tubulin family. In terms of assembly, dimer of alpha and beta chains. A typical microtubule is a hollow water-filled tube with an outer diameter of 25 nm and an inner diameter of 15 nM. Alpha-beta heterodimers associate head-to-tail to form protofilaments running lengthwise along the microtubule wall with the beta-tubulin subunit facing the microtubule plus end conferring a structural polarity. Microtubules usually have 13 protofilaments but different protofilament numbers can be found in some organisms and specialized cells. Mg(2+) serves as cofactor. Post-translationally, acetylation of alpha chains at Lys-40 stabilizes microtubules and affects affinity and processivity of microtubule motors. This modification has a role in multiple cellular functions, ranging from cell motility, cell cycle progression or cell differentiation to intracellular trafficking and signaling.

It is found in the cytoplasm. The protein localises to the cytoskeleton. It localises to the spindle. Its subcellular location is the nucleus. The catalysed reaction is GTP + H2O = GDP + phosphate + H(+). In terms of biological role, tubulin is the major constituent of microtubules, a cylinder consisting of laterally associated linear protofilaments composed of alpha- and beta-tubulin heterodimers. Microtubules grow by the addition of GTP-tubulin dimers to the microtubule end, where a stabilizing cap forms. Below the cap, tubulin dimers are in GDP-bound state, owing to GTPase activity of alpha-tubulin. This chain is Tubulin alpha-1B chain (ALTBN), found in Physarum polycephalum (Slime mold).